A 582-amino-acid chain; its full sequence is MGIPVRSLLVASIVLSSIALHVAAAKNLDPYKVLGVDKSASQRDIQKAFHKLSLKYHPDKNKSKGAQEKFAEINNAYDILSDEEKRKNYDLYGDEKGNPGFGGGNFGNREGYTYFTGGGAKTSHFSSGDGWQTMGGQGNTKTFSFSFGGGNPGAGGGNPFNFDFGDVFSNIFSGGSMGGSQHTGSAGKARRGTKSSGHDSSSVNIQEVTMQIFNKETADQGITWLLLFYTPNTKGQFVLESVVEDVARSLDGALRAGKVNCDHEKALCKKAGVSIGKSARLFIYSYTTTEKGSLHEYSGDYDSKSLKTFCQEHLPRFSKRVDINQFSFPSNIIPNLPQVLLLSAKKDTPAMWRAVSGMFRSRLIFYDAEVQDVSHPLLKSLGVKNIPALIGRSVNGEEQLLKDGISVKDLRSGIKELKNLLENFEKKNKKLASNQAKKPAHTDQPKENKIPLLTASNFEEICGEKTSVCILGIFKSSKAKENLEAVLSEISQKTLIRGQNYNSGNAVAYALLDGNKQSAFLSTFDKSAFKSSDKLLLAYKPRRGRYAVYDNEVTMEEAERFVVSVLNGDVQLSAAGRKPVLR.

The first 25 residues, 1–25 (MGIPVRSLLVASIVLSSIALHVAAA), serve as a signal peptide directing secretion. The 65-residue stretch at 29–93 (DPYKVLGVDK…EKRKNYDLYG (65 aa)) folds into the J domain. N61 carries N-linked (GlcNAc...) asparagine glycosylation. A disordered region spans residues 178 to 201 (GGSQHTGSAGKARRGTKSSGHDSS). A coiled-coil region spans residues 407 to 437 (VKDLRSGIKELKNLLENFEKKNKKLASNQAK).

In terms of assembly, interacts with BIP5.

Its subcellular location is the endoplasmic reticulum. It is found in the vacuole. In terms of biological role, may play a role in protein folding in the endoplasmic reticulum. The chain is DnaJ protein ERDJ3A from Oryza sativa subsp. japonica (Rice).